Consider the following 178-residue polypeptide: Large ribosomal subunit protein uL6 (178 aa).

The protein belongs to the universal ribosomal protein uL6 family. Part of the 50S ribosomal subunit.

Its function is as follows. This protein binds to the 23S rRNA, and is important in its secondary structure. It is located near the subunit interface in the base of the L7/L12 stalk, and near the tRNA binding site of the peptidyltransferase center. The sequence is that of Large ribosomal subunit protein uL6 from Streptococcus equi subsp. zooepidemicus (strain H70).